The following is a 579-amino-acid chain: Glutamine--tRNA ligase (579 aa).

Residues 41–51 (PEPNGYLHIGH) carry the 'HIGH' region motif. ATP contacts are provided by residues 42 to 44 (EPN) and 48 to 54 (HIGHAKA). L-glutamine contacts are provided by aspartate 74 and tyrosine 218. ATP contacts are provided by residues threonine 237, 285–286 (RL), and 293–295 (MSK). Positions 292–296 (VMSKR) match the 'KMSKS' region motif.

The protein belongs to the class-I aminoacyl-tRNA synthetase family. In terms of assembly, monomer.

It localises to the cytoplasm. It carries out the reaction tRNA(Gln) + L-glutamine + ATP = L-glutaminyl-tRNA(Gln) + AMP + diphosphate. The polypeptide is Glutamine--tRNA ligase (Xanthomonas euvesicatoria pv. vesicatoria (strain 85-10) (Xanthomonas campestris pv. vesicatoria)).